The sequence spans 1234 residues: ATP-dependent helicase/nuclease subunit A (1234 aa).

The UvrD-like helicase ATP-binding domain occupies 2–475 (TQFTTSQQAA…IILAENFRST (474 aa)). 23–30 (ASAGSGKT) is a binding site for ATP. One can recognise a UvrD-like helicase C-terminal domain in the interval 507–806 (YGALDYGDAH…KLMTIHKSKG (300 aa)).

Belongs to the helicase family. AddA subfamily. As to quaternary structure, heterodimer of AddA and AddB/RexB. The cofactor is Mg(2+).

It catalyses the reaction Couples ATP hydrolysis with the unwinding of duplex DNA by translocating in the 3'-5' direction.. The catalysed reaction is ATP + H2O = ADP + phosphate + H(+). The heterodimer acts as both an ATP-dependent DNA helicase and an ATP-dependent, dual-direction single-stranded exonuclease. Recognizes the chi site generating a DNA molecule suitable for the initiation of homologous recombination. The AddA nuclease domain is required for chi fragment generation; this subunit has the helicase and 3' -&gt; 5' nuclease activities. The sequence is that of ATP-dependent helicase/nuclease subunit A from Lacticaseibacillus casei (strain BL23) (Lactobacillus casei).